The following is a 109-amino-acid chain: Flagellar hook-basal body complex protein FliE 2 (109 aa).

It belongs to the FliE family.

The protein localises to the bacterial flagellum basal body. The polypeptide is Flagellar hook-basal body complex protein FliE 2 (fliE2) (Bradyrhizobium diazoefficiens (strain JCM 10833 / BCRC 13528 / IAM 13628 / NBRC 14792 / USDA 110)).